Here is a 1162-residue protein sequence, read N- to C-terminus: Integrin alpha-L (1162 aa).

The first 23 residues, 1–23 (MSFRIAGPRLLLLGLQLFAKAWS), serve as a signal peptide directing secretion. Residues 24–1088 (YNLDTRPTQS…DLIHEKEMLH (1065 aa)) are Extracellular-facing. 2 FG-GAP repeats span residues 28–79 (TRPT…FCQP) and 80–138 (VSLH…GPML). Cys-70 and Cys-77 are disulfide-bonded. Residue Asn-86 is glycosylated (N-linked (GlcNAc...) asparagine). 2 disulfide bridges follow: Cys-108/Cys-126 and Cys-147/Cys-199. Residues 153 to 325 (DLVFLFDGSQ…EKLKDLFTDL (173 aa)) form the VWFA domain. N-linked (GlcNAc...) asparagine glycans are attached at residues Asn-185 and Asn-270. 5 FG-GAP repeats span residues 336 to 387 (NRQD…GATF), 390 to 443 (QEPL…GGRW), 444 to 504 (NQTQ…LFEM), 505 to 561 (VSEL…GLSP), and 565 to 625 (QRIQ…FSPE). Residue Asn-444 is glycosylated (N-linked (GlcNAc...) asparagine). The Ca(2+) site is built by Asp-466, Asp-468, Asp-470, Glu-474, Asp-528, Asn-530, Asp-532, Asp-536, Asp-588, Asp-592, and Asp-596. The cysteines at positions 651 and 705 are disulfide-linked. Residues Asn-668, Asn-696, Asn-724, and Asn-728 are each glycosylated (N-linked (GlcNAc...) asparagine). Cysteines 768 and 774 form a disulfide. Residue Asn-777 is glycosylated (N-linked (GlcNAc...) asparagine). Residues Cys-841 and Cys-857 are joined by a disulfide bond. Asn-858, Asn-881, Asn-891, Asn-900, and Asn-928 each carry an N-linked (GlcNAc...) asparagine glycan. Cystine bridges form between Cys-994–Cys-1010 and Cys-1018–Cys-1049. Asn-1057 carries N-linked (GlcNAc...) asparagine glycosylation. A helical membrane pass occupies residues 1089–1109 (VYVLSGIGGLVLLFLIFLALY). Residues 1110-1162 (KVGFFKRNLKEKMEADGGVPNGSPPEDTDPLAVPGEETKDMGCLEPLRESDKD) lie on the Cytoplasmic side of the membrane. A GFFKR motif motif is present at residues 1112-1116 (GFFKR). The segment at 1124-1162 (ADGGVPNGSPPEDTDPLAVPGEETKDMGCLEPLRESDKD) is disordered. Residues 1145 to 1162 (EETKDMGCLEPLRESDKD) are compositionally biased toward basic and acidic residues.

Belongs to the integrin alpha chain family. As to quaternary structure, heterodimer of an alpha and a beta subunit. The ITGAL alpha subunit associates with the ITGB2 beta subunit. Interacts with THBD. Interacts with CD226. Post-translationally, in resting T-cells, up to 40% of surface ITGAL is constitutively phosphorylated. Phosphorylation causes conformational changes needed for ligand binding and is necessary for the activation by some physiological agents. Leukocytes.

The protein resides in the cell membrane. Functionally, integrin ITGAL/ITGB2 is a receptor for ICAM1, ICAM2, ICAM3 and ICAM4. Integrin ITGAL/ITGB2 is a receptor for F11R. Integrin ITGAL/ITGB2 is a receptor for the secreted form of ubiquitin-like protein ISG15; the interaction is mediated by ITGAL. Involved in a variety of immune phenomena including leukocyte-endothelial cell interaction, cytotoxic T-cell mediated killing, and antibody dependent killing by granulocytes and monocytes. Contributes to natural killer cell cytotoxicity. Involved in leukocyte adhesion and transmigration of leukocytes including T-cells and neutrophils. Acts as a platform at the immunological synapse to translate TCR engagement and density of the ITGAL ligand ICAM1 into graded adhesion. Required for generation of common lymphoid progenitor cells in bone marrow, indicating the role in lymphopoiesis. Integrin ITGAL/ITGB2 in association with ICAM3, contributes to apoptotic neutrophil phagocytosis by macrophages. This chain is Integrin alpha-L, found in Mus musculus (Mouse).